A 295-amino-acid chain; its full sequence is Nuclear transcription factor Y subunit A-2 (295 aa).

The short motif at Tyr139–Lys165 is the Subunit association domain (SAD) element. A DNA-binding region (NFYA/HAP2-type) is located at residues Lys173–Thr198. Residues His178–Arg189 are compositionally biased toward basic residues. The tract at residues His178–Asn244 is disordered. Residues Asn197–Asn209 are compositionally biased toward polar residues. A compositionally biased stretch (low complexity) spans Ser216–Ser233.

It belongs to the NFYA/HAP2 subunit family. Heterotrimeric transcription factor composed of three components, NF-YA, NF-YB and NF-YC. NF-YB and NF-YC must interact and dimerize for NF-YA association and DNA binding. Component of a heat stress-inducible transcriptional complex with NF-YA and NF-YB subunits made, at least, of NFYA2, NFYB3 and DPB3-1 in cooperation with DREB2A. Ubiquitous. Expressed in seedlings, roots, petioles, hypocotyls, reproductive organ tissues and leaves.

It is found in the nucleus. Its function is as follows. Stimulates the transcription of various genes by recognizing and binding to a CCAAT motif in promoters. Promotes the expression of heat stress-inducible genes by contributing to the formation of a heat stress-specific transcriptional complex with NF-Y subunits (e.g. DPB3-1, NF-YA2 and NF-YB3) and DREB2A at the promoter of target genes, thus promoting heat tolerance. The sequence is that of Nuclear transcription factor Y subunit A-2 from Arabidopsis thaliana (Mouse-ear cress).